A 317-amino-acid polypeptide reads, in one-letter code: Acetyl-coenzyme A carboxylase carboxyl transferase subunit alpha (317 aa).

The CoA carboxyltransferase C-terminal domain occupies 39-293; the sequence is RLESKAAAAL…GDALAEALTG (255 aa).

The protein belongs to the AccA family. As to quaternary structure, acetyl-CoA carboxylase is a heterohexamer composed of biotin carboxyl carrier protein (AccB), biotin carboxylase (AccC) and two subunits each of ACCase subunit alpha (AccA) and ACCase subunit beta (AccD).

It localises to the cytoplasm. The catalysed reaction is N(6)-carboxybiotinyl-L-lysyl-[protein] + acetyl-CoA = N(6)-biotinyl-L-lysyl-[protein] + malonyl-CoA. The protein operates within lipid metabolism; malonyl-CoA biosynthesis; malonyl-CoA from acetyl-CoA: step 1/1. Functionally, component of the acetyl coenzyme A carboxylase (ACC) complex. First, biotin carboxylase catalyzes the carboxylation of biotin on its carrier protein (BCCP) and then the CO(2) group is transferred by the carboxyltransferase to acetyl-CoA to form malonyl-CoA. This Methylobacterium nodulans (strain LMG 21967 / CNCM I-2342 / ORS 2060) protein is Acetyl-coenzyme A carboxylase carboxyl transferase subunit alpha.